The chain runs to 138 residues: Small ribosomal subunit protein uS11c (138 aa).

Positions 1–22 (MAKAIPKISSRRNGRISSRKGA) are disordered. The segment covering 9–22 (SSRRNGRISSRKGA) has biased composition (basic residues).

This sequence belongs to the universal ribosomal protein uS11 family. As to quaternary structure, part of the 30S ribosomal subunit.

The protein localises to the plastid. It localises to the chloroplast. The sequence is that of Small ribosomal subunit protein uS11c from Solanum bulbocastanum (Wild potato).